The following is a 287-amino-acid chain: Phosphatidylserine decarboxylase proenzyme (287 aa).

Active-site charge relay system; for autoendoproteolytic cleavage activity residues include Asp89, His146, and Ser252. Ser252 acts as the Schiff-base intermediate with substrate; via pyruvic acid; for decarboxylase activity in catalysis. Ser252 is subject to Pyruvic acid (Ser); by autocatalysis.

It belongs to the phosphatidylserine decarboxylase family. PSD-B subfamily. Prokaryotic type I sub-subfamily. Heterodimer of a large membrane-associated beta subunit and a small pyruvoyl-containing alpha subunit. The cofactor is pyruvate. In terms of processing, is synthesized initially as an inactive proenzyme. Formation of the active enzyme involves a self-maturation process in which the active site pyruvoyl group is generated from an internal serine residue via an autocatalytic post-translational modification. Two non-identical subunits are generated from the proenzyme in this reaction, and the pyruvate is formed at the N-terminus of the alpha chain, which is derived from the carboxyl end of the proenzyme. The autoendoproteolytic cleavage occurs by a canonical serine protease mechanism, in which the side chain hydroxyl group of the serine supplies its oxygen atom to form the C-terminus of the beta chain, while the remainder of the serine residue undergoes an oxidative deamination to produce ammonia and the pyruvoyl prosthetic group on the alpha chain. During this reaction, the Ser that is part of the protease active site of the proenzyme becomes the pyruvoyl prosthetic group, which constitutes an essential element of the active site of the mature decarboxylase.

Its subcellular location is the cell membrane. It carries out the reaction a 1,2-diacyl-sn-glycero-3-phospho-L-serine + H(+) = a 1,2-diacyl-sn-glycero-3-phosphoethanolamine + CO2. The protein operates within phospholipid metabolism; phosphatidylethanolamine biosynthesis; phosphatidylethanolamine from CDP-diacylglycerol: step 2/2. Its function is as follows. Catalyzes the formation of phosphatidylethanolamine (PtdEtn) from phosphatidylserine (PtdSer). This Shewanella amazonensis (strain ATCC BAA-1098 / SB2B) protein is Phosphatidylserine decarboxylase proenzyme.